Reading from the N-terminus, the 707-residue chain is Protein kinase C-like 1B (707 aa).

The region spanning 1–114 (MLFTGTVRVR…KIGSANDIWV (114 aa)) is the C2 domain. Phorbol-ester/DAG-type zinc fingers lie at residues 170–220 (GHKF…VWKC) and 248–298 (PHRF…ANNC). Positions 323 to 368 (SKKKPSIMTDTSTDISGSSNSENSGYLQQISEDDSGTTSSRSASKV) are disordered. Over residues 330–365 (MTDTSTDISGSSNSENSGYLQQISEDDSGTTSSRSA) the composition is skewed to polar residues. Residues 378–638 (FTFMKVLGKG…EDAIRAHPFF (261 aa)) enclose the Protein kinase domain. ATP is bound by residues 384 to 392 (LGKGSFGKV) and K407. Catalysis depends on D502, which acts as the Proton acceptor. The AGC-kinase C-terminal domain maps to 639 to 707 (REIDWDALES…FSFINPHFTY (69 aa)).

This sequence belongs to the protein kinase superfamily. AGC Ser/Thr protein kinase family. PKC subfamily. As to expression, expressed selectively in neurons that receive, transmit and process environmental signals.

It is found in the membrane. The protein localises to the cytoplasm. Its subcellular location is the cytoskeleton. The enzyme catalyses L-seryl-[protein] + ATP = O-phospho-L-seryl-[protein] + ADP + H(+). The catalysed reaction is L-threonyl-[protein] + ATP = O-phospho-L-threonyl-[protein] + ADP + H(+). Its function is as follows. PKC is activated by diacylglycerol which in turn phosphorylates a range of cellular proteins. PKC also serves as the receptor for phorbol esters, a class of tumor promoters. Involved in neuropeptide secretion in motor axons. Likely to act via the extracellular signal-regulated kinase/mitogen-activated protein kinase (ERK/MAPK) pathway in the signaling response to various sensory neurons; temperature, odor, taste, and osmolality. Its role in regulation differs depending on the neuron in which it is acting; thermosensation in AFD neurons, osmolality in ASH neurons, olfactory perception in AWA and AWC neurons. Promotes dauer formation mediated by the insulin/IGF pathway. Required for resistance to antimitotic toxins. In Caenorhabditis elegans, this protein is Protein kinase C-like 1B.